The following is a 129-amino-acid chain: Phosphomevalonate dehydratase small subunit (129 aa).

S61 acts as the Proton acceptor in catalysis.

Belongs to the AcnX type II small subunit family. In terms of assembly, heterodimer composed of a large subunit (PMDh-L) and a small subunit (PMDh-S).

The enzyme catalyses (R)-5-phosphomevalonate = (2E)-3-methyl-5-phosphooxypent-2-enoate + H2O. Its pathway is isoprenoid biosynthesis; isopentenyl diphosphate biosynthesis via mevalonate pathway. Functionally, component of a hydro-lyase that catalyzes the dehydration of mevalonate 5-phosphate (MVA5P) to form trans-anhydromevalonate 5-phosphate (tAHMP). Involved in the archaeal mevalonate (MVA) pathway, which provides fundamental precursors for isoprenoid biosynthesis, such as isopentenyl diphosphate (IPP) and dimethylallyl diphosphate (DMAPP). This is Phosphomevalonate dehydratase small subunit from Methanocaldococcus jannaschii (strain ATCC 43067 / DSM 2661 / JAL-1 / JCM 10045 / NBRC 100440) (Methanococcus jannaschii).